The primary structure comprises 349 residues: Gibberellin 3-beta-dioxygenase 3 (349 aa).

The region spanning S201–P305 is the Fe2OG dioxygenase domain. Fe cation contacts are provided by H226, D228, and H286. The active site involves R296.

Belongs to the iron/ascorbate-dependent oxidoreductase family. GA3OX subfamily. L-ascorbate is required as a cofactor. Fe cation serves as cofactor. As to expression, expressed in flower clusters and siliques.

The enzyme catalyses gibberellin A20 + 2-oxoglutarate + O2 = gibberellin A1 + succinate + CO2. Its pathway is plant hormone biosynthesis; gibberellin biosynthesis. Functionally, converts the inactive gibberellin (GA) precursors GA9 and GA20 in the bioactives gibberellins GA4 and GA1. Involved in the production of bioactive GA for reproductive development. This is Gibberellin 3-beta-dioxygenase 3 (GA3OX3) from Arabidopsis thaliana (Mouse-ear cress).